The following is a 216-amino-acid chain: Probable GTP-binding protein EngB (216 aa).

Residues 26–200 (EGIEIAFAGR…RAKLDTWFAP (175 aa)) enclose the EngB-type G domain. GTP is bound by residues 34-41 (GRSNAGKS), 61-65 (GRTQL), 79-82 (DLPG), 146-149 (TKAD), and 179-181 (YSS). Mg(2+) is bound by residues S41 and T63.

This sequence belongs to the TRAFAC class TrmE-Era-EngA-EngB-Septin-like GTPase superfamily. EngB GTPase family. The cofactor is Mg(2+).

Necessary for normal cell division and for the maintenance of normal septation. The protein is Probable GTP-binding protein EngB of Vibrio vulnificus (strain CMCP6).